We begin with the raw amino-acid sequence, 455 residues long: Kynurenine 3-monooxygenase (455 aa).

It belongs to the aromatic-ring hydroxylase family. KMO subfamily. The cofactor is FAD.

It catalyses the reaction L-kynurenine + NADPH + O2 + H(+) = 3-hydroxy-L-kynurenine + NADP(+) + H2O. It participates in cofactor biosynthesis; NAD(+) biosynthesis; quinolinate from L-kynurenine: step 1/3. In terms of biological role, catalyzes the hydroxylation of L-kynurenine (L-Kyn) to form 3-hydroxy-L-kynurenine (L-3OHKyn). Required for synthesis of quinolinic acid. The polypeptide is Kynurenine 3-monooxygenase (Xanthomonas oryzae pv. oryzae (strain PXO99A)).